The chain runs to 321 residues: S-methyl-5'-thioadenosine phosphorylase (321 aa).

Residues Thr-30, 73 to 74 (RH), and 106 to 107 (SA) each bind phosphate. Position 215 (Met-215) interacts with substrate. Ser-216 is a phosphate binding site. Position 239–241 (239–241 (DYD)) interacts with substrate.

It belongs to the PNP/MTAP phosphorylase family. MTAP subfamily. In terms of assembly, homotrimer.

The protein resides in the cytoplasm. The protein localises to the nucleus. The enzyme catalyses S-methyl-5'-thioadenosine + phosphate = 5-(methylsulfanyl)-alpha-D-ribose 1-phosphate + adenine. The protein operates within amino-acid biosynthesis; L-methionine biosynthesis via salvage pathway; S-methyl-5-thio-alpha-D-ribose 1-phosphate from S-methyl-5'-thioadenosine (phosphorylase route): step 1/1. In terms of biological role, catalyzes the reversible phosphorylation of S-methyl-5'-thioadenosine (MTA) to adenine and 5-methylthioribose-1-phosphate. Involved in the breakdown of MTA, a major by-product of polyamine biosynthesis. Responsible for the first step in the methionine salvage pathway after MTA has been generated from S-adenosylmethionine. Has broad substrate specificity with 6-aminopurine nucleosides as preferred substrates. This is S-methyl-5'-thioadenosine phosphorylase from Yarrowia lipolytica (strain CLIB 122 / E 150) (Yeast).